Here is a 559-residue protein sequence, read N- to C-terminus: Sesquiterpene synthase (559 aa).

D312, D316, and E464 together coordinate Mg(2+). Positions D312–D316 match the DDXXD motif motif.

The protein belongs to the terpene synthase family. Tpsa subfamily. The cofactor is Mg(2+). It depends on Mn(2+) as a cofactor.

Its function is as follows. Catalyzes alpha-humulene and delta-cadinene, as well as beta-elemene, the thermal rearrangement product of germacrene A and several other bicyclic sesquiterpenes when incubated with (2E,6E)-farnesyl diphosphate. The sequence is that of Sesquiterpene synthase from Santalum austrocaledonicum (Sandalwood).